The sequence spans 247 residues: MKINNQQRTGFGYFLYGIQLALSPEIRRFVVLPLLANIILVGGAIFYLFSHLNMWIEGWIGQLPEFLSWLTYILWPLLALTILATFSYFFSTLANFIAAPFNGLLAEKVEETLTGKKINDDGFTAVLKDVPRVLAREWRKLLYILPKAIGLFLLLLIPALGQTVGPVLWFIFTAWMLAIQYCDYPFDNHKIPFNDMRYKLKQKQGKAYGFGVLVSVFTTIPILNLIVMPVAICGATAMWVAEFKHQR.

5 helical membrane-spanning segments follow: residues 29-49 (FVVL…FYLF), 66-86 (FLSW…LATF), 141-160 (LLYI…IPAL), 164-186 (VGPV…DYPF), and 212-232 (VLVS…PVAI).

The protein belongs to the CysZ family.

The protein resides in the cell inner membrane. High affinity, high specificity proton-dependent sulfate transporter, which mediates sulfate uptake. Provides the sulfur source for the cysteine synthesis pathway. This Vibrio parahaemolyticus serotype O3:K6 (strain RIMD 2210633) protein is Sulfate transporter CysZ.